The primary structure comprises 61 residues: Probable tautomerase SMU_1087 (61 aa).

The Proton acceptor; via imino nitrogen role is filled by P2.

This sequence belongs to the 4-oxalocrotonate tautomerase family.

The protein is Probable tautomerase SMU_1087 of Streptococcus mutans serotype c (strain ATCC 700610 / UA159).